Here is a 546-residue protein sequence, read N- to C-terminus: MASKEINFSDSARNKLYEGVRQLADAVKVTMGPRGRNVLIQKSFGAPSITKDGVSVAKEIELADAISNMGAQLVKEVASKTADAAGDGTTTATVLAHGIFKEGLRNITAGANPIEVKRGMDKATAAIIDELKKLSKKVNDKKEIAQVATISANSDENIGSLIAEAMEKVGKDGVITVEEAKGINDELNVVEGMQFDRGYLSPYFVTNSDKMEAVLENPYILLTDKKITSMKDILPLLEGTMKSGRPLLIVAEDIEGEALTTLVVNKLRGVLNVAAVKAPGFGDRRKEMLKDIATLTGGSVISEEIGKTLESATIADLGQAARVVIDKDNSTIVDGKGSKDEVNARVAQIRTQIEATTSDYDREKLQERLAKLSGGVAVIKVGAASEVEMKEKKDRVDDALSATKAAVEEGIVIGGGAALIRAAAKVKLELSGDEKIGYEIIKRAISAPLKQIAQNAGFDAGVVANNVEQNGNENFGFNAANGEYVDMFAEGIIDPLKVARIALQNAVSVSSLLLTTEATISEIKEDKPAMPDMSGMGGMGGMGGMM.

Residues 30–33, Lys-51, 87–91, Gly-415, 478–480, and Asp-494 contribute to the ATP site; these read TMGP, DGTTT, and NAA.

The protein belongs to the chaperonin (HSP60) family. Forms a cylinder of 14 subunits composed of two heptameric rings stacked back-to-back. Interacts with the co-chaperonin GroES.

It localises to the cytoplasm. It catalyses the reaction ATP + H2O + a folded polypeptide = ADP + phosphate + an unfolded polypeptide.. Its function is as follows. Together with its co-chaperonin GroES, plays an essential role in assisting protein folding. The GroEL-GroES system forms a nano-cage that allows encapsulation of the non-native substrate proteins and provides a physical environment optimized to promote and accelerate protein folding. The polypeptide is Chaperonin GroEL (Wolinella succinogenes (strain ATCC 29543 / DSM 1740 / CCUG 13145 / JCM 31913 / LMG 7466 / NCTC 11488 / FDC 602W) (Vibrio succinogenes)).